A 212-amino-acid polypeptide reads, in one-letter code: Pyridoxine/pyridoxamine 5'-phosphate oxidase (212 aa).

Substrate contacts are provided by residues 8-11 (RREY) and Lys66. FMN-binding positions include 61–66 (RIVLLK), 76–77 (FT), Arg82, Lys83, and Gln105. Substrate contacts are provided by Tyr123, Arg127, and Ser131. Residues 140–141 (QS) and Trp185 contribute to the FMN site. A substrate-binding site is contributed by 191 to 193 (RLH). Arg195 is an FMN binding site.

This sequence belongs to the pyridoxamine 5'-phosphate oxidase family. In terms of assembly, homodimer. It depends on FMN as a cofactor.

It catalyses the reaction pyridoxamine 5'-phosphate + O2 + H2O = pyridoxal 5'-phosphate + H2O2 + NH4(+). The catalysed reaction is pyridoxine 5'-phosphate + O2 = pyridoxal 5'-phosphate + H2O2. The protein operates within cofactor metabolism; pyridoxal 5'-phosphate salvage; pyridoxal 5'-phosphate from pyridoxamine 5'-phosphate: step 1/1. It functions in the pathway cofactor metabolism; pyridoxal 5'-phosphate salvage; pyridoxal 5'-phosphate from pyridoxine 5'-phosphate: step 1/1. Its function is as follows. Catalyzes the oxidation of either pyridoxine 5'-phosphate (PNP) or pyridoxamine 5'-phosphate (PMP) into pyridoxal 5'-phosphate (PLP). The sequence is that of Pyridoxine/pyridoxamine 5'-phosphate oxidase from Shewanella baltica (strain OS223).